The sequence spans 103 residues: Large ribosomal subunit protein bL21 (103 aa).

This sequence belongs to the bacterial ribosomal protein bL21 family. Part of the 50S ribosomal subunit. Contacts protein L20.

In terms of biological role, this protein binds to 23S rRNA in the presence of protein L20. The chain is Large ribosomal subunit protein bL21 from Pseudomonas fluorescens (strain Pf0-1).